Consider the following 229-residue polypeptide: Purine nucleoside phosphorylase BB_0467 (229 aa).

Residues His-55, Cys-91, and His-108 each coordinate Zn(2+).

It belongs to the purine nucleoside phosphorylase YfiH/LACC1 family. In terms of assembly, homodimer. Requires Cu(2+) as cofactor. It depends on Zn(2+) as a cofactor.

The enzyme catalyses adenosine + phosphate = alpha-D-ribose 1-phosphate + adenine. It carries out the reaction S-methyl-5'-thioadenosine + phosphate = 5-(methylsulfanyl)-alpha-D-ribose 1-phosphate + adenine. It catalyses the reaction inosine + phosphate = alpha-D-ribose 1-phosphate + hypoxanthine. The catalysed reaction is adenosine + H2O + H(+) = inosine + NH4(+). Its function is as follows. Purine nucleoside enzyme that catalyzes the phosphorolysis of adenosine and inosine nucleosides, yielding D-ribose 1-phosphate and the respective free bases, adenine and hypoxanthine. Also catalyzes the phosphorolysis of S-methyl-5'-thioadenosine into adenine and S-methyl-5-thio-alpha-D-ribose 1-phosphate. Also has adenosine deaminase activity. In Borreliella burgdorferi (strain ATCC 35210 / DSM 4680 / CIP 102532 / B31) (Borrelia burgdorferi), this protein is Purine nucleoside phosphorylase BB_0467.